The primary structure comprises 126 residues: Large ribosomal subunit protein uL22 (126 aa).

Belongs to the universal ribosomal protein uL22 family. As to quaternary structure, part of the 50S ribosomal subunit.

Functionally, this protein binds specifically to 23S rRNA; its binding is stimulated by other ribosomal proteins, e.g. L4, L17, and L20. It is important during the early stages of 50S assembly. It makes multiple contacts with different domains of the 23S rRNA in the assembled 50S subunit and ribosome. In terms of biological role, the globular domain of the protein is located near the polypeptide exit tunnel on the outside of the subunit, while an extended beta-hairpin is found that lines the wall of the exit tunnel in the center of the 70S ribosome. This chain is Large ribosomal subunit protein uL22, found in Bradyrhizobium sp. (strain BTAi1 / ATCC BAA-1182).